Here is a 240-residue protein sequence, read N- to C-terminus: Protein unc-119 homolog A (240 aa).

Gly residues predominate over residues Met-1–Gly-11. Residues Met-1–Pro-59 are required for midbody localization. Residues Met-1 to Gly-61 are disordered. Phosphoserine; by CK2 is present on residues Ser-37, Ser-39, and Ser-41. The tract at residues Leu-121–Pro-240 is required for centrosome localization. Tyr-131 is a tetradecanoate binding site.

Belongs to the PDE6D/unc-119 family. In terms of assembly, interacts with CABP4; in the absence of calcium. Interacts with DNM1; leading to a decrease of DNM1 GTPase activity. May interact with GTP-bound ARL1. Interacts with ARL2 and ARL3 (GTP-bound forms); this promotes the release of myyristoylated cargo proteins. Found in a complex with ARL3, RP2 and UNC119; RP2 induces hydrolysis of GTP ARL3 in the complex, leading to the release of UNC119. Interacts with NPHP3 (when myristoylated). Interacts with CYS1 (when myristoylated). Interacts with MACIR; interaction only takes place when UNC119 is not liganded with myristoylated proteins. Interacts with LCK; this interaction plays a crucial role in activation of LCK. Interacts with FYN. Interacts with RAB11A; in a cell cycle-dependent manner. Interacts with LYN (via SH2 and SH3 domains); leading to LYN activation. Found in a complex with ABL1, ABL2, CRK and UNC119; leading to the inhibition of CRK phosphorylation by ABL kinases. Interacts with CD44; leading to Shigella invasion. Interacts with KLHL18 (via kelch repeats). Interacts with PPP3CA, PPP3CB and PPP3CC. Interacts with USP48; this interaction promotes UNC119 stability. Post-translationally, phosphorylation suppresses its interaction with KLHL18 and down-regulates its KLHL18-mediated degradation. Phosphorylated more under light conditions than dark conditions. Dephosphorylated by calcineurin. Abundantly expressed in retina, in photoreceptor synapses and inner segments. Expressed in a much lesser extent in several other tissues.

It is found in the cytoplasm. It localises to the cytoskeleton. The protein localises to the microtubule organizing center. Its subcellular location is the centrosome. The protein resides in the spindle pole. It is found in the spindle. Involved in synaptic functions in photoreceptor cells, the signal transduction in immune cells as a Src family kinase activator, endosome recycling, the uptake of bacteria and endocytosis, protein trafficking in sensory neurons and as lipid-binding chaperone with specificity for a diverse subset of myristoylated proteins. Specifically binds the myristoyl moiety of a subset of N-terminally myristoylated proteins and is required for their localization. Binds myristoylated GNAT1 and is required for G-protein localization and trafficking in sensory neurons. Probably plays a role in trafficking proteins in photoreceptor cells. Plays important roles in mediating Src family kinase signals for the completion of cytokinesis via RAB11A. This chain is Protein unc-119 homolog A (UNC119), found in Homo sapiens (Human).